A 228-amino-acid polypeptide reads, in one-letter code: Urease accessory protein UreF (228 aa).

Belongs to the UreF family. UreD, UreF and UreG form a complex that acts as a GTP-hydrolysis-dependent molecular chaperone, activating the urease apoprotein by helping to assemble the nickel containing metallocenter of UreC. The UreE protein probably delivers the nickel.

Its subcellular location is the cytoplasm. Functionally, required for maturation of urease via the functional incorporation of the urease nickel metallocenter. This chain is Urease accessory protein UreF, found in Prochlorococcus marinus (strain AS9601).